A 271-amino-acid chain; its full sequence is Mannosyl-3-phosphoglycerate phosphatase (271 aa).

Asp13 (nucleophile) is an active-site residue. Mg(2+)-binding residues include Asp13, Asp15, and Asp214.

The protein belongs to the HAD-like hydrolase superfamily. MPGP family. It depends on Mg(2+) as a cofactor.

The protein resides in the cytoplasm. It catalyses the reaction 2-O-(alpha-D-mannosyl)-3-phosphoglycerate + H2O = (2R)-2-O-(alpha-D-mannosyl)-glycerate + phosphate. The polypeptide is Mannosyl-3-phosphoglycerate phosphatase (Escherichia coli O81 (strain ED1a)).